The sequence spans 132 residues: Bleomycin resistance protein (132 aa).

In terms of domain architecture, VOC spans 1-129 (MLQSIPALPV…DNNLISFFQQ (129 aa)).

This sequence belongs to the bleomycin resistance protein family.

In terms of biological role, binding protein with a strong affinity to the bleomycin family of antibiotics. The polypeptide is Bleomycin resistance protein (bleO) (Geobacillus stearothermophilus (Bacillus stearothermophilus)).